A 101-amino-acid polypeptide reads, in one-letter code: NAD(P)H-quinone oxidoreductase subunit 4L, chloroplastic (101 aa).

3 helical membrane passes run 2 to 22 (ILEHVLVLSAYLFLIGLYGLI), 32 to 52 (MCLELILNAVNMNFVTFSDFF), and 61 to 81 (IFCIFVIAIAAAEAAIGLAIV).

This sequence belongs to the complex I subunit 4L family. In terms of assembly, NDH is composed of at least 16 different subunits, 5 of which are encoded in the nucleus.

It localises to the plastid. The protein localises to the chloroplast thylakoid membrane. The catalysed reaction is a plastoquinone + NADH + (n+1) H(+)(in) = a plastoquinol + NAD(+) + n H(+)(out). It catalyses the reaction a plastoquinone + NADPH + (n+1) H(+)(in) = a plastoquinol + NADP(+) + n H(+)(out). In terms of biological role, NDH shuttles electrons from NAD(P)H:plastoquinone, via FMN and iron-sulfur (Fe-S) centers, to quinones in the photosynthetic chain and possibly in a chloroplast respiratory chain. The immediate electron acceptor for the enzyme in this species is believed to be plastoquinone. Couples the redox reaction to proton translocation, and thus conserves the redox energy in a proton gradient. The chain is NAD(P)H-quinone oxidoreductase subunit 4L, chloroplastic from Olimarabidopsis pumila (Dwarf rocket).